Reading from the N-terminus, the 281-residue chain is Ras-related protein Rab-40C (281 aa).

GTP contacts are provided by Ser-23, Gly-26, Lys-27, and Ser-46. The switch-I stretch occupies residues 41 to 49; the sequence is SPYAYSNGI. Ser-46 and Asp-69 together coordinate Mg(2+). The GTP site is built by Gly-72, Asn-126, and Arg-127. Residues 72 to 88 are switch-II; that stretch reads GQGRFCTIFRSYSRGAQ. Positions 175-228 constitute an SOCS box domain; that stretch reads LMRHGMEKIWRPNRVFSLQDLCCRAIVSCTPVHLIDKLPLPVTIKSHLKSFSMA. The interval 245-281 is disordered; that stretch reads SGAGGSGSKGNSLKRSKSIRPPQSPPQNCSRSNCKIS. The segment covering 270-281 has biased composition (polar residues); sequence PQNCSRSNCKIS. Cys-273 carries the S-palmitoyl cysteine lipid modification. Cys-278 carries S-geranylgeranyl cysteine lipidation.

It belongs to the small GTPase superfamily. Rab family. As to quaternary structure, component of the cullin-5-RING E3 ubiquitin-protein ligase complex (ECS(RAB40C) complex) composed of CUL5, Elongin BC (ELOB and ELOC), RNF7/RBX2 and RAB40C. Interacts with protein phosphatase 6 (PP6) complex components ANKRD28, ANKRD52, PPP6C, PP6R1 and PP6R2; the interaction leads to ANKRD28 ubiquitination and decreased PP6 activity. Interacts with DAB2IP; DAB2IP acts as a GAP for RAB40C. Mg(2+) is required as a cofactor.

It localises to the cell membrane. Its subcellular location is the cytoplasm. The protein resides in the cytosol. It is found in the golgi apparatus membrane. The catalysed reaction is GTP + H2O = GDP + phosphate + H(+). It functions in the pathway protein modification; protein ubiquitination. Its activity is regulated as follows. Regulated by guanine nucleotide exchange factors (GEFs) which promote the exchange of bound GDP for free GTP. Regulated by GTPase activating proteins (GAPs) including DAB2IP, which increase the GTP hydrolysis activity. Inhibited by GDP dissociation inhibitors (GDIs). In terms of biological role, RAB40C small GTPase acts as substrate-recognition component of the ECS(RAB40C) E3 ubiquitin ligase complex which mediates the ubiquitination and subsequent proteasomal degradation of target proteins. The Rab40 subfamily belongs to the Rab family that are key regulators of intracellular membrane trafficking, from the formation of transport vesicles to their fusion with membranes. Rabs cycle between an inactive GDP-bound form and an active GTP-bound form that is able to recruit to membranes different sets of downstream effectors directly responsible for vesicle formation, movement, tethering and fusion. As part of the ECS(RAB40C) complex, mediates ANKRD28 ubiquitination and degradation, thereby inhibiting protein phosphatase 6 (PP6) complex activity and focal adhesion assembly during cell migration. Also negatively regulate lipid droplets accumulation in a GTP-dependent manner. This chain is Ras-related protein Rab-40C, found in Mus musculus (Mouse).